A 179-amino-acid chain; its full sequence is Replication restart protein DnaT (179 aa).

The tract at residues 156–179 (GGLPKRDVNTVSEPDSQIPPGFRG) is disordered.

This sequence belongs to the DnaT family. Homooligomerizes. Interacts with PriB. Component of the replication restart primosome. Primosome assembly occurs via a 'hand-off' mechanism. PriA binds to replication forks, subsequently PriB then DnaT bind; DnaT then displaces ssDNA to generate the helicase loading substrate.

Functionally, involved in the restart of stalled replication forks, which reloads the replicative helicase on sites other than the origin of replication. Can function in multiple replication restart pathways. Displaces ssDNA from a PriB-ssDNA complex. Probably forms a spiral filament on ssDNA. This chain is Replication restart protein DnaT, found in Escherichia coli O81 (strain ED1a).